We begin with the raw amino-acid sequence, 563 residues long: Testis-expressed basic protein 1 (563 aa).

Residues 3–23 (VLEITLAVILTLLGLAILAIL) traverse the membrane as a helical segment. A disordered region spans residues 56–81 (GSRHAYSTQSDTSYDNRERSKRDYTP). Positions 69-79 (YDNRERSKRDY) are enriched in basic and acidic residues. The chain crosses the membrane as a helical span at residues 99–119 (ELILLLMCFILALSRSSIGSI). The disordered stretch occupies residues 311-563 (SEMSIPQGQG…GRKYNKKVEE (253 aa)). The span at 367 to 383 (QVEKSEMGVPRRQESQV) shows a compositional bias: basic and acidic residues. Positions 384–395 (KKSQSGVSKGQE) are enriched in low complexity. Composition is skewed to basic and acidic residues over residues 412 to 447 (QVEK…KKSE) and 485 to 544 (EAQE…EKSK).

It is found in the membrane. This is Testis-expressed basic protein 1 from Homo sapiens (Human).